The following is a 74-amino-acid chain: Conotoxin Bu4 (74 aa).

Residues Met1 to Ala22 form the signal peptide. Residues Glu23 to Arg45 constitute a propeptide that is removed on maturation. 3 cysteine pairs are disulfide-bonded: Cys47/Cys63, Cys54/Cys66, and Cys62/Cys73.

The protein belongs to the conotoxin O1 superfamily. In terms of tissue distribution, expressed by the venom duct.

The protein resides in the secreted. The polypeptide is Conotoxin Bu4 (Conus bullatus (Bubble cone)).